A 131-amino-acid polypeptide reads, in one-letter code: Glycine cleavage system H protein (131 aa).

The 83-residue stretch at 24–106 folds into the Lipoyl-binding domain; the sequence is RVTVGISDHA…YGEGWIFVVE (83 aa). Lys-65 is modified (N6-lipoyllysine).

Belongs to the GcvH family. The glycine cleavage system is composed of four proteins: P, T, L and H. (R)-lipoate is required as a cofactor.

In terms of biological role, the glycine cleavage system catalyzes the degradation of glycine. The H protein shuttles the methylamine group of glycine from the P protein to the T protein. This chain is Glycine cleavage system H protein, found in Xanthomonas euvesicatoria pv. vesicatoria (strain 85-10) (Xanthomonas campestris pv. vesicatoria).